The chain runs to 165 residues: Regulatory protein RecX (165 aa).

It belongs to the RecX family.

It is found in the cytoplasm. In terms of biological role, modulates RecA activity. The chain is Regulatory protein RecX from Cronobacter sakazakii (strain ATCC BAA-894) (Enterobacter sakazakii).